The sequence spans 109 residues: Ribonuclease P protein component (109 aa).

This sequence belongs to the RnpA family. As to quaternary structure, consists of a catalytic RNA component (M1 or rnpB) and a protein subunit.

It carries out the reaction Endonucleolytic cleavage of RNA, removing 5'-extranucleotides from tRNA precursor.. RNaseP catalyzes the removal of the 5'-leader sequence from pre-tRNA to produce the mature 5'-terminus. It can also cleave other RNA substrates such as 4.5S RNA. The protein component plays an auxiliary but essential role in vivo by binding to the 5'-leader sequence and broadening the substrate specificity of the ribozyme. The chain is Ribonuclease P protein component from Streptococcus agalactiae serotype Ia (strain ATCC 27591 / A909 / CDC SS700).